Reading from the N-terminus, the 274-residue chain is 3-methyl-2-oxobutanoate hydroxymethyltransferase (274 aa).

Mg(2+)-binding residues include D49 and D88. 3-methyl-2-oxobutanoate-binding positions include 49–50, D88, and K118; that span reads DS. E120 provides a ligand contact to Mg(2+). Catalysis depends on E187, which acts as the Proton acceptor.

This sequence belongs to the PanB family. In terms of assembly, homodecamer; pentamer of dimers. It depends on Mg(2+) as a cofactor.

It localises to the cytoplasm. It carries out the reaction 3-methyl-2-oxobutanoate + (6R)-5,10-methylene-5,6,7,8-tetrahydrofolate + H2O = 2-dehydropantoate + (6S)-5,6,7,8-tetrahydrofolate. It participates in cofactor biosynthesis; (R)-pantothenate biosynthesis; (R)-pantoate from 3-methyl-2-oxobutanoate: step 1/2. In terms of biological role, catalyzes the reversible reaction in which hydroxymethyl group from 5,10-methylenetetrahydrofolate is transferred onto alpha-ketoisovalerate to form ketopantoate. The polypeptide is 3-methyl-2-oxobutanoate hydroxymethyltransferase (Rhodopseudomonas palustris (strain BisB18)).